Reading from the N-terminus, the 927-residue chain is MLKKLWICISCIVTTALSDHITFSPPDEAFVLFHSHQNTNFTSVFVQDGCPNSRNLMATVYSADLSSSRRVFEEIPLHCAVRVRIITEKVVVTRPYVDLLAVVDESLSRHVGAICVHAQLTSSTSAIELGKCYLNRHEDQKSSCVIRIPVPFSWFPVDQNRTSVLSVSYTVSEKCDQNFHDLPQHLIEVNSRIAKQKIDWLANATETSVTLLSTASQAFSQNSMQTLFLHVKSWANETQPMEIRLWVDSRMSIETVYPTSSNWTIRVSSASRPFFYTSLVCTPKERMTGFNDNIVAILIKMVSSTDAIKDDVILHWHVILGPKSSEPPPDDHKVATKFSVIADEVAAVVIVPKRKELMNLAVISGIQVTSSLRIFTISIGAKAEDVTTQSHCISSDANIIKVSPTCSSVYLDGSESNGSSDAQVYAHYLRYTTTYSFRVWFPKLPLKIWMSSSTLSTIKNWKVGFWRDLPLGGGVKRSRAARQFACVNRFQHSHVKVLASLWIEDIKTGDQLYLSSHKSILFDVTNIVHNTLQISNRTVANVKFYEGRAKVIGENVGLAKLIVRNAKKSMDLVSENISVQNKEVSTTGLSARPICDTSFRILPILFSPAFFKVEIAHSKSLTKLYQQCSIFASVSYSDATWEPLNDLDSSYFEMSAHSDNERALAVSHHASKVHVIAIDENWPLPVVEISLQSSAQCASTINGASPAALAVTVLNVPIKINNSFPSATDLDSSFSTTIAPSDSLPSIPFHIFVLTIIGLIILFLFISFVRRSAAFKGYEQLVVPFFSRLSSSSGSNSRQEETNEWVWLSQPQPPSSTISSGYSGNKSTAERQSSNGDDPSRTSISYHGSEISVFIAPSQGNVVVNQSSRHPRYTLVDSNSDHNLARIVPKEDRWTTGGHEQFHTWTWKQRGGGGGRMMEAPIRESIA.

A signal peptide spans 1–18 (MLKKLWICISCIVTTALS). Residues 749–769 (FHIFVLTIIGLIILFLFISFV) traverse the membrane as a helical segment. The tract at residues 789 to 842 (LSSSSGSNSRQEETNEWVWLSQPQPPSSTISSGYSGNKSTAERQSSNGDDPSRT) is disordered. A compositionally biased stretch (polar residues) spans 817 to 842 (TISSGYSGNKSTAERQSSNGDDPSRT).

Belongs to the TMEM132 family. As to quaternary structure, interacts with gex-3. Specifically expressed in neurons.

It is found in the membrane. Regulates neuronal morphology via inhibition of the WAVE regulatory complex (WCR), a complex that controls F-actin cytoskeletal dynamics. The sequence is that of Transmembrane protein 132 homolog from Caenorhabditis elegans.